The sequence spans 92 residues: Endoribonuclease HigB (92 aa).

H92 is an active-site residue.

Forms a complex with the antitoxin HigA which inhibits the mRNA interferase activity. The heterodimer dimerizes to form a HigB-(HigA)2-HigB tetramer that is able to bind to the DNA.

Functionally, toxic component of a type II toxin-antitoxin (TA) system. A ribosome-associated translation-dependent mRNA interferase. Inhibits translation by sequence-specific cleavage of mRNA. Prefers either in-frame or out-of-frame 5'-AAA-3' codons (lysine). Also cleaves the first three AAAs of stretches of four or more A sequences. 20% of codons containing AA are cleaved and occassionally cuts even at a single A. The chain is Endoribonuclease HigB from Proteus vulgaris.